The primary structure comprises 1813 residues: Latent-transforming growth factor beta-binding protein 2 (1813 aa).

An N-terminal signal peptide occupies residues 1–35 (MRAPTTARCSGCIQRVRWRGFLPLVLAVLMGTSHA). Positions 94–115 (NPGWLAEAEARRPPRTQQLRRV) are heparin-binding. Residues 103–152 (ARRPPRTQQLRRVQPPVQTRRSHPRGQQQIAARAAPSVARLETPQRPAAA) are disordered. Positions 108-132 (RTQQLRRVQPPVQTRRSHPRGQQQI) are enriched in polar residues. Asn175 carries N-linked (GlcNAc...) asparagine glycosylation. The 33-residue stretch at 181 to 213 (IKPVCQPPCQNRGSCSRPQVCICRSGFRGARCE) folds into the EGF-like 1 domain. Disulfide bonds link Cys185–Cys195, Cys189–Cys201, and Cys203–Cys212. A disordered region spans residues 220–305 (EFDPQNARPV…QLMSNALPSG (86 aa)). The tract at residues 226-243 (ARPVPRRSVERAPGPHRS) is heparin-binding. A compositionally biased stretch (pro residues) spans 257 to 266 (LVPPPSPPPS). The span at 293–302 (ANGQLMSNAL) shows a compositional bias: polar residues. N-linked (GlcNAc...) asparagine glycosylation occurs at Asn328. 329-339 (LTEKIKKIKVV) is a heparin binding site. The EGF-like 2 domain maps to 381–413 (RIYFCQIPCLNGGRCIGRDECWCPANSTGKFCH). 3 cysteine pairs are disulfide-bonded: Cys385–Cys395, Cys389–Cys401, and Cys403–Cys412. Asn406 carries N-linked (GlcNAc...) asparagine glycosylation. Ser491 is modified (phosphoserine). The segment at 492–524 (VETRASHRPHGNLGHSPWASNSIPARAGEAPRP) is disordered. The TB 1 domain occupies 536-588 (GQCYLSTVNGQCANPLGSLTSQEDCCGSVGTFWGVTSCAPCPPRQEGPAFPVI). 3 disulfides stabilise this stretch: Cys538–Cys560, Cys547–Cys573, and Cys561–Cys576. An N-linked (GlcNAc...) asparagine glycan is attached at Asn603. Positions 609-649 (DINECLTLGLCKDSECVNTRGSYLCTCRPGLMLDPSRSRCV) constitute an EGF-like 3; calcium-binding domain. 7 disulfides stabilise this stretch: Cys613-Cys624, Cys619-Cys633, Cys635-Cys648, Cys661-Cys683, Cys670-Cys696, Cys684-Cys699, and Cys685-Cys711. The region spanning 659 to 711 (GLCYRSLGSGTCTLPLVHRITKQICCCSRVGKAWGSTCEQCPLPGTEAFREIC) is the TB 2 domain. 2 disordered regions span residues 730 to 761 (KAEE…QPLR) and 787 to 819 (SAPH…PAEE). The EGF-like 4 domain maps to 835 to 877 (DFDPCFAGASNICGPGTCVSLPNGYRCVCSPGYQLHPSQDYCT). 49 cysteine pairs are disulfide-bonded: Cys839-Cys852, Cys847-Cys861, Cys863-Cys876, Cys882-Cys893, Cys887-Cys902, Cys904-Cys919, Cys925-Cys936, Cys931-Cys945, Cys947-Cys959, Cys965-Cys976, Cys971-Cys985, Cys988-Cys999, Cys1005-Cys1016, Cys1011-Cys1025, Cys1027-Cys1040, Cys1046-Cys1057, Cys1052-Cys1066, Cys1069-Cys1082, Cys1088-Cys1099, Cys1094-Cys1108, Cys1111-Cys1124, Cys1130-Cys1142, Cys1137-Cys1151, Cys1153-Cys1165, Cys1171-Cys1183, Cys1177-Cys1192, Cys1194-Cys1207, Cys1213-Cys1224, Cys1219-Cys1233, Cys1235-Cys1249, Cys1255-Cys1268, Cys1263-Cys1277, Cys1281-Cys1293, Cys1299-Cys1311, Cys1305-Cys1320, Cys1322-Cys1335, Cys1341-Cys1353, Cys1348-Cys1362, Cys1364-Cys1378, Cys1405-Cys1428, Cys1415-Cys1440, Cys1429-Cys1443, Cys1430-Cys1455, Cys1481-Cys1494, Cys1489-Cys1503, Cys1505-Cys1518, Cys1524-Cys1534, Cys1529-Cys1543, and Cys1545-Cys1558. Positions 878 to 920 (DDNECMRNPCEGRGRCVNSVGSYSCLCYPGYTLVTLGDTQECQ) constitute an EGF-like 5; calcium-binding domain. An EGF-like 6; calcium-binding domain is found at 921-960 (DIDECEQPGVCSGGRCSNTEGSYHCECDRGYIMVRKGHCQ). One can recognise an EGF-like 7; calcium-binding domain in the interval 961-1000 (DINECRHPGTCPDGRCVNSPGSYTCLACEEGYVGQSGSCV). Positions 1001–1041 (DVNECLTPGICTHGRCINMEGSFRCSCEPGYEVTPDKKGCR) constitute an EGF-like 8; calcium-binding domain. An EGF-like 9; calcium-binding domain is found at 1042–1083 (DVDECASRASCPTGLCLNTEGSFTCSACQSGYWVNEDGTACE). The 42-residue stretch at 1084-1125 (DLDECAFPGVCPTGVCTNTVGSFSCKDCDQGYRPNPLGNRCE) folds into the EGF-like 10; calcium-binding domain. The region spanning 1126-1166 (DVDECEGPQSSCRGGECKNTEGSYQCLCHQGFQLVNGTMCE) is the EGF-like 11; calcium-binding domain. Asn1161 carries N-linked (GlcNAc...) asparagine glycosylation. The 42-residue stretch at 1167 to 1208 (DVNECVGEEHCAPHGECLNSLGSFFCLCAPGFASAEGGTRCQ) folds into the EGF-like 12; calcium-binding domain. In terms of domain architecture, EGF-like 13; calcium-binding spans 1209-1250 (DVDECAATDPCPGGHCVNTEGSFSCLCETASFQPSPDSGECL). The 44-residue stretch at 1251 to 1294 (DIDECEDREDPVCGAWRCENSPGSYRCILDCQPGFYVAPNGDCI) folds into the EGF-like 14; calcium-binding domain. The EGF-like 15; calcium-binding domain maps to 1295 to 1336 (DIDECANDTVCGNHGFCDNTDGSFRCLCDQGFETSPSGWECV). The N-linked (GlcNAc...) asparagine glycan is linked to Asn1301. In terms of domain architecture, EGF-like 16; calcium-binding spans 1337 to 1379 (DVNECELMMAVCGDALCENVEGSFLCLCASDLEEYDAEEGHCR). Positions 1403 to 1455 (MECYSEHNGGPPCSQILGQNSTQAECCCTQGARWGKACAPCPSEDSVEFSQLC) constitute a TB 3 domain. Asn1422 is a glycosylation site (N-linked (GlcNAc...) asparagine). The EGF-like 17; calcium-binding domain occupies 1477 to 1519 (DADECVLFGPALCQNGRCSNIVPGYICLCNPGYHYDASSRKCQ). One can recognise an EGF-like 18; calcium-binding domain in the interval 1520 to 1559 (DHNECQDLACENGECVNQEGSFHCLCNPPLTLDLSGQRCV). An N-linked (GlcNAc...) asparagine glycan is attached at Asn1560. One can recognise a TB 4 domain in the interval 1576 to 1628 (DICWKKVTNDVCSQPLRGHHTTYTECCCQDGEAWSQQCALCPPRSSEVYAQLC). Intrachain disulfides connect Cys1578-Cys1601, Cys1587-Cys1613, Cys1602-Cys1616, and Cys1603-Cys1628. The tract at residues 1631–1813 (ARIEAERGAG…PGPPHCAAKE (183 aa)) is C-terminal domain. Residues 1671-1717 (YLGPEDTAPEPPFSNPASQPGDNTPVLEPPLQPSELQPHYLASHSEP) form a disordered region. The EGF-like 19; calcium-binding domain maps to 1725 to 1765 (QAEECGILNGCENGRCVRVREGYTCDCFEGFQLDAPTLACV). 6 cysteine pairs are disulfide-bonded: Cys1729–Cys1740, Cys1735–Cys1749, Cys1751–Cys1764, Cys1770–Cys1785, Cys1780–Cys1794, and Cys1796–Cys1809. The EGF-like 20; calcium-binding domain occupies 1766–1810 (DVNECEDLNGPARLCAHGHCENTEGSYRCHCSPGYVAEPGPPHCA).

This sequence belongs to the LTBP family. Forms part of the large latent transforming growth factor beta precursor complex; removal is essential for activation of complex. Interacts with SDC4. Interacts (via C-terminal domain) with FBN1 (via N-terminal domain) in a Ca(+2)-dependent manner. In terms of processing, N-Glycosylated. Contains hydroxylated asparagine residues. As to expression, expressed in the anterior chamber of the eye.

Its subcellular location is the secreted. The protein resides in the extracellular space. It localises to the extracellular matrix. In terms of biological role, may play an integral structural role in elastic-fiber architectural organization and/or assembly. The protein is Latent-transforming growth factor beta-binding protein 2 (Ltbp2) of Mus musculus (Mouse).